The following is a 314-amino-acid chain: Methionyl-tRNA formyltransferase (314 aa).

110–113 is a binding site for (6S)-5,6,7,8-tetrahydrofolate; sequence SLLP.

Belongs to the Fmt family.

The catalysed reaction is L-methionyl-tRNA(fMet) + (6R)-10-formyltetrahydrofolate = N-formyl-L-methionyl-tRNA(fMet) + (6S)-5,6,7,8-tetrahydrofolate + H(+). Its function is as follows. Attaches a formyl group to the free amino group of methionyl-tRNA(fMet). The formyl group appears to play a dual role in the initiator identity of N-formylmethionyl-tRNA by promoting its recognition by IF2 and preventing the misappropriation of this tRNA by the elongation apparatus. The protein is Methionyl-tRNA formyltransferase of Dichelobacter nodosus (strain VCS1703A).